Consider the following 1744-residue polypeptide: Tanabin (1744 aa).

Positions 1-12 are head; sequence MEGYLASVSLGE. The interval 8–48 is coil 1A; the sequence is VSLGEESTQMWSLNKRLEAYLSRVKALEEENELLRKEIHSL. The IF rod domain occupies 13-320; that stretch reads ESTQMWSLNK…SLLEAESTRI (308 aa). The interval 49–60 is linker 1; sequence RSSKSERCWKKK. Positions 61–156 are coil 1B; it reads HHEEMMKLRD…RDHEEEKALM (96 aa). The interval 157–179 is linker 12; it reads EEEIASFSQRLENFRVAPVAFKP. A coil 2A region spans residues 180–193; sequence VEVDDYARKLSEIW. Residues 194–199 are linker 2; sequence QGAVEE. A coil 2B region spans residues 200 to 314; sequence YKSEVSVLEA…EVATYRSLLE (115 aa). Positions 315 to 1744 are tail; sequence AESTRIYTDY…KKALRWKRMF (1430 aa). Basic and acidic residues-rich tracts occupy residues 341–371 and 785–815; these read RRRQSEDTRKTVSKDHRQSYSKKQIGDKNEL and HSHHEETKTSESIAVEHNRMESEHAEVDKSS. Disordered stretches follow at residues 341-372, 785-816, 976-996, 1032-1093, 1340-1470, 1485-1506, and 1560-1722; these read RRRQSEDTRKTVSKDHRQSYSKKQIGDKNELQ, HSHHEETKTSESIAVEHNRMESEHAEVDKSSE, EENQLSENEGNQNFGGNDIEE, SMED…QQED, DSDL…FGDV, SGLAQEPSYLGDNEESEDSMEN, and AREK…LNGH. The segment covering 980-990 has biased composition (polar residues); the sequence is LSENEGNQNFG. The segment covering 1034–1056 has biased composition (acidic residues); the sequence is EDEEEQNNPETEDNIGLEQESDQ. Positions 1074–1086 are enriched in basic and acidic residues; the sequence is VVFKPEDMSDKSE. The span at 1340–1351 shows a compositional bias: acidic residues; it reads DSDLESTEEQVQ. The segment covering 1352–1367 has biased composition (basic and acidic residues); the sequence is ETERIPFKPEDSKMEN. Residues 1368–1377 are compositionally biased toward acidic residues; the sequence is ENSESEESVD. The span at 1386 to 1398 shows a compositional bias: basic and acidic residues; sequence HKSEEFEISKDYQ. Residues 1412–1421 show a composition bias toward acidic residues; sequence LEDEFEDLTE. Basic and acidic residues predominate over residues 1423 to 1432; it reads PDVHEEHQNN. Residues 1433 to 1442 show a composition bias toward polar residues; sequence DDSGASTFIT. A compositionally biased stretch (basic and acidic residues) spans 1445–1460; it reads DEDKEREVRESVSKDE. Residues 1496 to 1505 are compositionally biased toward acidic residues; the sequence is DNEESEDSME. Composition is skewed to polar residues over residues 1576 to 1586, 1597 to 1621, and 1629 to 1639; these read EFTNENQSASP, EDSVISDNEGTTSSYEDLPNATSIS, and SNISTTEQSST. Acidic residues predominate over residues 1680-1691; that stretch reads RSEDEELDDEGS. Positions 1698-1709 are enriched in basic and acidic residues; it reads NDEKANGEHKDV.

It belongs to the intermediate filament family. In terms of tissue distribution, growth cones of embryonic vertebrate neurons.

This Xenopus laevis (African clawed frog) protein is Tanabin.